The sequence spans 101 residues: Urease subunit beta (101 aa).

The protein belongs to the urease beta subunit family. Heterotrimer of UreA (gamma), UreB (beta) and UreC (alpha) subunits. Three heterotrimers associate to form the active enzyme.

Its subcellular location is the cytoplasm. The enzyme catalyses urea + 2 H2O + H(+) = hydrogencarbonate + 2 NH4(+). The protein operates within nitrogen metabolism; urea degradation; CO(2) and NH(3) from urea (urease route): step 1/1. In Paraburkholderia xenovorans (strain LB400), this protein is Urease subunit beta.